Here is a 223-residue protein sequence, read N- to C-terminus: Ribose-5-phosphate isomerase A (223 aa).

Substrate is bound by residues 32-35 (TGST), 85-88 (DGAD), and 98-101 (KGGG). Catalysis depends on Glu-107, which acts as the Proton acceptor. Lys-125 is a substrate binding site.

It belongs to the ribose 5-phosphate isomerase family. In terms of assembly, homodimer.

It carries out the reaction aldehydo-D-ribose 5-phosphate = D-ribulose 5-phosphate. Its pathway is carbohydrate degradation; pentose phosphate pathway; D-ribose 5-phosphate from D-ribulose 5-phosphate (non-oxidative stage): step 1/1. Functionally, catalyzes the reversible conversion of ribose-5-phosphate to ribulose 5-phosphate. This Pseudomonas savastanoi pv. phaseolicola (strain 1448A / Race 6) (Pseudomonas syringae pv. phaseolicola (strain 1448A / Race 6)) protein is Ribose-5-phosphate isomerase A.